Here is a 163-residue protein sequence, read N- to C-terminus: UPF0303 protein SAV_5210 (163 aa).

This sequence belongs to the UPF0303 family.

The protein is UPF0303 protein SAV_5210 of Streptomyces avermitilis (strain ATCC 31267 / DSM 46492 / JCM 5070 / NBRC 14893 / NCIMB 12804 / NRRL 8165 / MA-4680).